A 359-amino-acid chain; its full sequence is uncharacterized protein (359 aa).

A signal peptide spans 1–17; that stretch reads MLGRSLTSVLIVPTGIG. Cys-18 carries the N-palmitoyl cysteine lipid modification. Cys-18 carries the S-diacylglycerol cysteine lipid modification.

The protein resides in the cell membrane. This is an uncharacterized protein from Synechococcus sp. (strain ATCC 27144 / PCC 6301 / SAUG 1402/1) (Anacystis nidulans).